The primary structure comprises 97 residues: Protein transport protein SFT1 (97 aa).

Over 1–74 the chain is Cytoplasmic; the sequence is MSNSRYSQTE…RLTRSLKAGN (74 aa). In terms of domain architecture, t-SNARE coiled-coil homology spans 7–69; that stretch reads SQTESNNDRK…KNSSSRLTRS (63 aa). The helical; Anchor for type IV membrane protein transmembrane segment at 75–94 threads the bilayer; it reads SIWRMVGLALLIFFILYTLF. Over 95-97 the chain is Lumenal; the sequence is KLF.

As to quaternary structure, component of a SNARE complex consisting of SED5, GOS1, YKT6 and SFT1.

Its subcellular location is the golgi apparatus membrane. Functionally, vesicle SNARE required for retrograde transport within the Golgi complex. In Saccharomyces cerevisiae (strain ATCC 204508 / S288c) (Baker's yeast), this protein is Protein transport protein SFT1 (SFT1).